The primary structure comprises 63 residues: Large ribosomal subunit protein uL29 (63 aa).

This sequence belongs to the universal ribosomal protein uL29 family.

This chain is Large ribosomal subunit protein uL29, found in Colwellia psychrerythraea (strain 34H / ATCC BAA-681) (Vibrio psychroerythus).